The primary structure comprises 155 residues: Ribosome maturation factor RimP (155 aa).

Belongs to the RimP family.

The protein resides in the cytoplasm. Required for maturation of 30S ribosomal subunits. The sequence is that of Ribosome maturation factor RimP from Prochlorococcus marinus (strain MIT 9312).